We begin with the raw amino-acid sequence, 167 residues long: Transcription antitermination protein NusB (167 aa).

The protein belongs to the NusB family.

In terms of biological role, involved in transcription antitermination. Required for transcription of ribosomal RNA (rRNA) genes. Binds specifically to the boxA antiterminator sequence of the ribosomal RNA (rrn) operons. This is Transcription antitermination protein NusB from Nitrosomonas europaea (strain ATCC 19718 / CIP 103999 / KCTC 2705 / NBRC 14298).